Reading from the N-terminus, the 269-residue chain is 4-hydroxy-tetrahydrodipicolinate reductase (269 aa).

NAD(+)-binding positions include 11 to 16 (GASGRM) and Glu37. Arg38 serves as a coordination point for NADP(+). NAD(+) contacts are provided by residues 101 to 103 (GTT) and 125 to 128 (AGNM). The active-site Proton donor/acceptor is the His158. Residue His159 participates in (S)-2,3,4,5-tetrahydrodipicolinate binding. The active-site Proton donor is Lys162. (S)-2,3,4,5-tetrahydrodipicolinate is bound at residue 168 to 169 (GT).

It belongs to the DapB family.

It is found in the cytoplasm. The catalysed reaction is (S)-2,3,4,5-tetrahydrodipicolinate + NAD(+) + H2O = (2S,4S)-4-hydroxy-2,3,4,5-tetrahydrodipicolinate + NADH + H(+). It carries out the reaction (S)-2,3,4,5-tetrahydrodipicolinate + NADP(+) + H2O = (2S,4S)-4-hydroxy-2,3,4,5-tetrahydrodipicolinate + NADPH + H(+). Its pathway is amino-acid biosynthesis; L-lysine biosynthesis via DAP pathway; (S)-tetrahydrodipicolinate from L-aspartate: step 4/4. Catalyzes the conversion of 4-hydroxy-tetrahydrodipicolinate (HTPA) to tetrahydrodipicolinate. The protein is 4-hydroxy-tetrahydrodipicolinate reductase of Cereibacter sphaeroides (strain KD131 / KCTC 12085) (Rhodobacter sphaeroides).